We begin with the raw amino-acid sequence, 44 residues long: F420-non-reducing hydrogenase vhu subunit U (44 aa).

Sec-20 and Cys-23 together coordinate Ni(2+). Residue Sec-20 is a non-standard amino acid, selenocysteine. A propeptide spans 27–44 (MIVEDAEGNVVFEIVNDE) (removed in mature form).

This sequence belongs to the [NiFe]/[NiFeSe] hydrogenase large subunit family. In terms of assembly, the F420-non-reducing hydrogenase vhu is composed of four subunits; VhuA, VhuD, VhuG and VhuU. The cofactor is Ni(2+).

This is F420-non-reducing hydrogenase vhu subunit U (vhuU) from Methanococcus voltae.